The chain runs to 81 residues: Large ribosomal subunit protein bL31B (81 aa).

This sequence belongs to the bacterial ribosomal protein bL31 family. Type B subfamily. Part of the 50S ribosomal subunit.

This is Large ribosomal subunit protein bL31B from Borreliella afzelii (strain PKo) (Borrelia afzelii).